The sequence spans 1098 residues: Eukaryotic translation initiation factor 3 subunit A (1098 aa).

One can recognise a PCI domain in the interval 324-503 (AQEQATRVLL…DCVRFGSSDA (180 aa)). The stretch at 574–844 (TEIERIHRRK…ARQAVIDSQR (271 aa)) forms a coiled coil. Disordered regions lie at residues 599 to 648 (EKAA…KIKR) and 805 to 1098 (RAEK…NWRR). Basic and acidic residues-rich tracts occupy residues 608–648 (QAKR…KIKR), 805–857 (RAEK…REME), and 877–895 (MPQR…EPFR). Positions 905–914 (DSSWRSSAQP) are enriched in polar residues. Composition is skewed to basic and acidic residues over residues 916-978 (RKPD…ERGA) and 1054-1079 (LPPR…RDGP). Over residues 1080-1098 (NRNSGANNAGNADSANWRR) the composition is skewed to low complexity.

This sequence belongs to the eIF-3 subunit A family. In terms of assembly, component of the eukaryotic translation initiation factor 3 (eIF-3) complex.

It is found in the cytoplasm. RNA-binding component of the eukaryotic translation initiation factor 3 (eIF-3) complex, which is involved in protein synthesis of a specialized repertoire of mRNAs and, together with other initiation factors, stimulates binding of mRNA and methionyl-tRNAi to the 40S ribosome. The eIF-3 complex specifically targets and initiates translation of a subset of mRNAs involved in cell proliferation. The polypeptide is Eukaryotic translation initiation factor 3 subunit A (Caenorhabditis briggsae).